Consider the following 97-residue polypeptide: Co-chaperonin GroES (97 aa).

This sequence belongs to the GroES chaperonin family. Heptamer of 7 subunits arranged in a ring. Interacts with the chaperonin GroEL.

The protein resides in the cytoplasm. Functionally, together with the chaperonin GroEL, plays an essential role in assisting protein folding. The GroEL-GroES system forms a nano-cage that allows encapsulation of the non-native substrate proteins and provides a physical environment optimized to promote and accelerate protein folding. GroES binds to the apical surface of the GroEL ring, thereby capping the opening of the GroEL channel. The polypeptide is Co-chaperonin GroES (Buchnera aphidicola subsp. Thelaxes suberi).